Consider the following 421-residue polypeptide: MKLTQEIKFSLQKTQKVLSIQMQVHHINDFTKLFKKCIFPGSRWQLEQENIKSIATTFEEPLPENLQEFIKENNCQILEKEVTVGYDNMTYNEVLQQLLPKNVQAPQGYEIIGKIAHFNLSLEQLPYKYLIGQVLLDKNKHLQTVCNKLEKLHNVYRTPQLELLAGNNSYDAIVPEGGVRLFLNFEKVYWCTRLYSERERVIKYIKELSNGKNIKVLDLFCGIGPFSLRIAKDLNAQCLANDLNPECYYYLLKNIIENKVQNQVTPLNMDAREVVLKIYNKEIDFDFNHVYMNLPVLAINFLDVFKGFTQRTGKVDLPYIHVYGFAKGKDDQELIEQFSQRIIKGLPGFDKSQILRFHILKNVTKMKKMCCLSFQLDKKSAESEFGLVEQEDGNNSDFEDDEKMEQHELVEDVVNKKVKID.

Residues arginine 198, 242–243 (DL), 270–271 (DA), and asparagine 293 each bind S-adenosyl-L-methionine.

This sequence belongs to the class I-like SAM-binding methyltransferase superfamily. TRM5/TYW2 family. As to quaternary structure, monomer.

The protein localises to the mitochondrion matrix. It localises to the nucleus. Its subcellular location is the cytoplasm. It catalyses the reaction guanosine(37) in tRNA + S-adenosyl-L-methionine = N(1)-methylguanosine(37) in tRNA + S-adenosyl-L-homocysteine + H(+). Functionally, specifically methylates the N1 position of guanosine-37 in various cytoplasmic and mitochondrial tRNAs. Methylation is not dependent on the nature of the nucleoside 5' of the target nucleoside. This is the first step in the biosynthesis of wybutosine (yW), a modified base adjacent to the anticodon of tRNAs and required for accurate decoding. This chain is tRNA (guanine(37)-N(1))-methyltransferase, found in Paramecium tetraurelia.